Here is a 473-residue protein sequence, read N- to C-terminus: Aspartyl/glutamyl-tRNA(Asn/Gln) amidotransferase subunit B (473 aa).

This sequence belongs to the GatB/GatE family. GatB subfamily. As to quaternary structure, heterotrimer of A, B and C subunits.

It carries out the reaction L-glutamyl-tRNA(Gln) + L-glutamine + ATP + H2O = L-glutaminyl-tRNA(Gln) + L-glutamate + ADP + phosphate + H(+). The catalysed reaction is L-aspartyl-tRNA(Asn) + L-glutamine + ATP + H2O = L-asparaginyl-tRNA(Asn) + L-glutamate + ADP + phosphate + 2 H(+). In terms of biological role, allows the formation of correctly charged Asn-tRNA(Asn) or Gln-tRNA(Gln) through the transamidation of misacylated Asp-tRNA(Asn) or Glu-tRNA(Gln) in organisms which lack either or both of asparaginyl-tRNA or glutaminyl-tRNA synthetases. The reaction takes place in the presence of glutamine and ATP through an activated phospho-Asp-tRNA(Asn) or phospho-Glu-tRNA(Gln). The polypeptide is Aspartyl/glutamyl-tRNA(Asn/Gln) amidotransferase subunit B (Wolbachia sp. subsp. Drosophila simulans (strain wRi)).